The sequence spans 296 residues: uncharacterized protein (296 aa).

The N-terminal stretch at 1–20 (MKKLLLIIITVFFAFNVAQA) is a signal peptide.

This is an uncharacterized protein from Rickettsia felis (strain ATCC VR-1525 / URRWXCal2) (Rickettsia azadi).